A 554-amino-acid chain; its full sequence is 7-epi-sesquithujene synthase (554 aa).

Mg(2+)-binding residues include aspartate 308 and aspartate 312. Positions 308, 312, 449, and 452 each coordinate substrate. Positions 308–312 match the DDXXD motif motif; sequence DDMFD. Residues asparagine 452, serine 456, and glutamate 460 each coordinate Mg(2+).

The protein belongs to the terpene synthase family. As to quaternary structure, monomer. It depends on Mg(2+) as a cofactor. The cofactor is Mn(2+). In terms of tissue distribution, highly expressed in the husk. Detected in leaf sheaths and leaves.

It localises to the cytoplasm. It carries out the reaction (2E,6E)-farnesyl diphosphate = 7-epi-sesquithujene + diphosphate. The enzyme catalyses (2E,6E)-farnesyl diphosphate = (1S,5S,6R)-alpha-bergamotene + diphosphate. The catalysed reaction is (2E,6E)-farnesyl diphosphate = (E)-beta-farnesene + diphosphate. It catalyses the reaction (2E,6E)-farnesyl diphosphate = (S)-beta-bisabolene + diphosphate. It carries out the reaction (2Z,6E)-farnesyl diphosphate = (-)-beta-curcumene + diphosphate. The enzyme catalyses (2E,6E)-farnesyl diphosphate = gamma-curcumene + diphosphate. The catalysed reaction is (2E,6E)-farnesyl diphosphate = sesquisabinene A + diphosphate. It functions in the pathway secondary metabolite biosynthesis; terpenoid biosynthesis. Sesquiterpene synthase involved in the production after herbivore attack of a blend of volatiles that attracts natural enemies of herbivores. Converts farnesyl diphosphate to (S)-beta-bisabolene and 7-epi-sesquithujene, along with a mixture of more than 20 other minor sesquiterpene olefins. Can also act in vitro as a monoterpene synthase, converting geranyl diphosphate to (S)-(-)-limonene, beta-myrcene and 11 other monoterpenes. The protein is 7-epi-sesquithujene synthase of Zea mays (Maize).